A 621-amino-acid polypeptide reads, in one-letter code: Elongation factor 4 (621 aa).

The 183-residue stretch at 21–203 folds into the tr-type G domain; that stretch reads DLIRNICIIA…AIVKRVPPPK (183 aa). GTP contacts are provided by residues 33 to 38 and 150 to 153; these read DHGKTT and NKID.

Belongs to the TRAFAC class translation factor GTPase superfamily. Classic translation factor GTPase family. LepA subfamily.

The protein resides in the cell inner membrane. It carries out the reaction GTP + H2O = GDP + phosphate + H(+). Functionally, required for accurate and efficient protein synthesis under certain stress conditions. May act as a fidelity factor of the translation reaction, by catalyzing a one-codon backward translocation of tRNAs on improperly translocated ribosomes. Back-translocation proceeds from a post-translocation (POST) complex to a pre-translocation (PRE) complex, thus giving elongation factor G a second chance to translocate the tRNAs correctly. Binds to ribosomes in a GTP-dependent manner. This chain is Elongation factor 4, found in Thermotoga maritima (strain ATCC 43589 / DSM 3109 / JCM 10099 / NBRC 100826 / MSB8).